Consider the following 931-residue polypeptide: Protein translocase subunit SecA (931 aa).

ATP contacts are provided by residues Gln-87, 105–109, and Asp-515; that span reads GEGKT. The Zn(2+) site is built by Cys-915, Cys-917, Cys-926, and His-927.

This sequence belongs to the SecA family. Monomer and homodimer. Part of the essential Sec protein translocation apparatus which comprises SecA, SecYEG and auxiliary proteins SecDF-YajC and YidC. Zn(2+) is required as a cofactor.

Its subcellular location is the cell inner membrane. The protein localises to the cytoplasm. The enzyme catalyses ATP + H2O + cellular proteinSide 1 = ADP + phosphate + cellular proteinSide 2.. Functionally, part of the Sec protein translocase complex. Interacts with the SecYEG preprotein conducting channel. Has a central role in coupling the hydrolysis of ATP to the transfer of proteins into and across the cell membrane, serving both as a receptor for the preprotein-SecB complex and as an ATP-driven molecular motor driving the stepwise translocation of polypeptide chains across the membrane. The polypeptide is Protein translocase subunit SecA (Burkholderia ambifaria (strain MC40-6)).